Here is an 89-residue protein sequence, read N- to C-terminus: Small ribosomal subunit protein uS15 (89 aa).

It belongs to the universal ribosomal protein uS15 family. In terms of assembly, part of the 30S ribosomal subunit. Forms a bridge to the 50S subunit in the 70S ribosome, contacting the 23S rRNA.

Its function is as follows. One of the primary rRNA binding proteins, it binds directly to 16S rRNA where it helps nucleate assembly of the platform of the 30S subunit by binding and bridging several RNA helices of the 16S rRNA. Forms an intersubunit bridge (bridge B4) with the 23S rRNA of the 50S subunit in the ribosome. The chain is Small ribosomal subunit protein uS15 from Hyphomonas neptunium (strain ATCC 15444).